The primary structure comprises 293 residues: Ribosomal protein L11 methyltransferase (293 aa).

The S-adenosyl-L-methionine site is built by T145, G166, D188, and N230.

The protein belongs to the methyltransferase superfamily. PrmA family.

It localises to the cytoplasm. The catalysed reaction is L-lysyl-[protein] + 3 S-adenosyl-L-methionine = N(6),N(6),N(6)-trimethyl-L-lysyl-[protein] + 3 S-adenosyl-L-homocysteine + 3 H(+). Its function is as follows. Methylates ribosomal protein L11. This chain is Ribosomal protein L11 methyltransferase, found in Shewanella woodyi (strain ATCC 51908 / MS32).